The primary structure comprises 299 residues: Regucalcin (299 aa).

Glutamate 18 lines the a divalent metal cation pocket. 3 residues coordinate substrate: arginine 101, asparagine 103, and glutamate 121. A divalent metal cation-binding residues include asparagine 154 and aspartate 204. Aspartate 204 serves as the catalytic Proton donor/acceptor. N6-succinyllysine is present on residues lysine 244 and lysine 253.

Belongs to the SMP-30/CGR1 family. In terms of assembly, monomer. Requires Zn(2+) as cofactor. Mn(2+) is required as a cofactor. The cofactor is Ca(2+). Mg(2+) serves as cofactor.

It localises to the cytoplasm. The enzyme catalyses D-glucono-1,5-lactone + H2O = D-gluconate + H(+). It participates in cofactor biosynthesis; L-ascorbate biosynthesis via UDP-alpha-D-glucuronate pathway; L-ascorbate from UDP-alpha-D-glucuronate: step 3/4. Its function is as follows. Gluconolactonase with low activity towards other sugar lactones, including gulonolactone and galactonolactone. Catalyzes a key step in ascorbic acid (vitamin C) biosynthesis. Can also hydrolyze diisopropyl phosphorofluoridate and phenylacetate (in vitro). Calcium-binding protein. Modulates Ca(2+) signaling, and Ca(2+)-dependent cellular processes and enzyme activities. This chain is Regucalcin (RGN), found in Bos taurus (Bovine).